Reading from the N-terminus, the 288-residue chain is Acetyl-coenzyme A carboxylase carboxyl transferase subunit beta (288 aa).

Residues 34–288 (LFAKCPGCKQ…TLLSFHGGVQ (255 aa)) form the CoA carboxyltransferase N-terminal domain. The Zn(2+) site is built by C38, C41, C56, and C59. The C4-type zinc-finger motif lies at 38 to 59 (CPGCKQAIYQKDLGQAKICPNC).

The protein belongs to the AccD/PCCB family. As to quaternary structure, acetyl-CoA carboxylase is a heterohexamer composed of biotin carboxyl carrier protein (AccB), biotin carboxylase (AccC) and two subunits each of ACCase subunit alpha (AccA) and ACCase subunit beta (AccD). Zn(2+) serves as cofactor.

It localises to the cytoplasm. It carries out the reaction N(6)-carboxybiotinyl-L-lysyl-[protein] + acetyl-CoA = N(6)-biotinyl-L-lysyl-[protein] + malonyl-CoA. It participates in lipid metabolism; malonyl-CoA biosynthesis; malonyl-CoA from acetyl-CoA: step 1/1. Its function is as follows. Component of the acetyl coenzyme A carboxylase (ACC) complex. Biotin carboxylase (BC) catalyzes the carboxylation of biotin on its carrier protein (BCCP) and then the CO(2) group is transferred by the transcarboxylase to acetyl-CoA to form malonyl-CoA. This is Acetyl-coenzyme A carboxylase carboxyl transferase subunit beta from Streptococcus thermophilus (strain ATCC BAA-491 / LMD-9).